Reading from the N-terminus, the 267-residue chain is 1-(5-phosphoribosyl)-5-[(5-phosphoribosylamino)methylideneamino] imidazole-4-carboxamide isomerase (267 aa).

The protein belongs to the HisA/HisF family.

The protein localises to the cytoplasm. It catalyses the reaction 1-(5-phospho-beta-D-ribosyl)-5-[(5-phospho-beta-D-ribosylamino)methylideneamino]imidazole-4-carboxamide = 5-[(5-phospho-1-deoxy-D-ribulos-1-ylimino)methylamino]-1-(5-phospho-beta-D-ribosyl)imidazole-4-carboxamide. Its pathway is amino-acid biosynthesis; L-histidine biosynthesis; L-histidine from 5-phospho-alpha-D-ribose 1-diphosphate: step 4/9. This Kluyveromyces lactis (strain ATCC 8585 / CBS 2359 / DSM 70799 / NBRC 1267 / NRRL Y-1140 / WM37) (Yeast) protein is 1-(5-phosphoribosyl)-5-[(5-phosphoribosylamino)methylideneamino] imidazole-4-carboxamide isomerase (HIS6).